The chain runs to 266 residues: Interleukin-1 beta (266 aa).

Residues 1 to 113 constitute a propeptide that is removed on maturation; that stretch reads MAPVPEPINE…ETSSDEFLCD (113 aa).

This sequence belongs to the IL-1 family. In terms of assembly, monomer. In its precursor form, weakly interacts with full-length MEFV; the mature cytokine does not interact at all. Interacts with integrins ITGAV:ITGBV and ITGA5:ITGB1; integrin-binding is required for IL1B signaling. Interacts with cargo receptor TMED10; the interaction is direct and is required for the secretion of IL1B mature form. Interacts with HSP90AB1; the interaction facilitates cargo translocation into the ERGIC. Interacts with HSP90B1; the interaction facilitates cargo translocation into the ERGIC.

It localises to the cytoplasm. The protein localises to the cytosol. It is found in the secreted. Its subcellular location is the lysosome. The protein resides in the extracellular exosome. Functionally, potent pro-inflammatory cytokine. Initially discovered as the major endogenous pyrogen, induces prostaglandin synthesis, neutrophil influx and activation, T-cell activation and cytokine production, B-cell activation and antibody production, and fibroblast proliferation and collagen production. Promotes Th17 differentiation of T-cells. Synergizes with IL12/interleukin-12 to induce IFNG synthesis from T-helper 1 (Th1) cells. Plays a role in angiogenesis by inducing VEGF production synergistically with TNF and IL6. Involved in transduction of inflammation downstream of pyroptosis: its mature form is specifically released in the extracellular milieu by passing through the gasdermin-D (GSDMD) pore. In Cervus elaphus (Red deer), this protein is Interleukin-1 beta (IL1B).